Reading from the N-terminus, the 222-residue chain is UPF0758 protein Cag_1513 (222 aa).

Residues 100–222 enclose the MPN domain; sequence KIMAAGDVFE…WYSFRERGLL (123 aa). The Zn(2+) site is built by His-171, His-173, and Asp-184. Positions 171–184 match the JAMM motif motif; it reads HNHPSGDVNPSNAD.

The protein belongs to the UPF0758 family.

This chain is UPF0758 protein Cag_1513, found in Chlorobium chlorochromatii (strain CaD3).